We begin with the raw amino-acid sequence, 235 residues long: Urease accessory protein UreF (235 aa).

It belongs to the UreF family. UreD, UreF and UreG form a complex that acts as a GTP-hydrolysis-dependent molecular chaperone, activating the urease apoprotein by helping to assemble the nickel containing metallocenter of UreC. The UreE protein probably delivers the nickel.

It is found in the cytoplasm. Functionally, required for maturation of urease via the functional incorporation of the urease nickel metallocenter. The sequence is that of Urease accessory protein UreF from Psychrobacter cryohalolentis (strain ATCC BAA-1226 / DSM 17306 / VKM B-2378 / K5).